Here is a 774-residue protein sequence, read N- to C-terminus: Pentatricopeptide repeat-containing protein At4g20770 (774 aa).

20 PPR repeats span residues 5-39, 40-70, 71-101, 102-136, 137-171, 172-203, 204-238, 239-270, 283-313, 314-348, 349-379, 380-414, 415-449, 450-480, 482-516, 518-552, 553-583, 584-618, 619-654, and 655-685; these read GNKY…GMKS, DTYL…MSVR, DVYS…MPER, DVVS…GFLP, SRFT…GLDK, NIFV…LSQP, NEVS…GVQV, DSVC…LGKQ, DLHL…MPEV, NVVS…GFQP, NEVT…IPQP, SVSA…NLKP, DKTT…EISK, NSHI…CINE, DIAC…AVLC, NETS…GYVS, DSFV…VLRK, NTVI…GEKP, DGIT…GIEP, and ELDH…TPYK. Residues 690–765 are type E motif; it reads LWEILLSSCR…TPGQSWTTYG (76 aa).

The protein belongs to the PPR family. PCMP-E subfamily.

The chain is Pentatricopeptide repeat-containing protein At4g20770 (PCMP-E35) from Arabidopsis thaliana (Mouse-ear cress).